The primary structure comprises 136 residues: Histone H3 (136 aa).

Positions 1–42 (MARTKQTARKSTGGKAPRKQIAAKAARKAAPSTGGVKKPHRY) are disordered. N6,N6,N6-trimethyllysine; alternate is present on lysine 5. N6,N6-dimethyllysine; alternate is present on lysine 5. An N6-methyllysine; alternate mark is found at lysine 5 and lysine 10. Lysine 10 bears the N6-acetyllysine; alternate mark. Serine 11 carries the post-translational modification Phosphoserine. Lysine 15 carries the N6,N6-dimethyllysine; alternate modification. Residues lysine 15, lysine 19, lysine 24, lysine 28, and lysine 37 each carry the N6-acetyllysine; alternate modification. An N6-methyllysine; alternate mark is found at lysine 19, lysine 24, lysine 28, and lysine 37. The span at 19 to 31 (KQIAAKAARKAAP) shows a compositional bias: low complexity. N6,N6,N6-trimethyllysine; alternate is present on residues lysine 28 and lysine 37. 2 positions are modified to N6,N6-dimethyllysine; alternate: lysine 28 and lysine 37. Lysine 57 and lysine 65 each carry N6-acetyllysine. Lysine 80 carries the N6,N6,N6-trimethyllysine; alternate modification. N6,N6-dimethyllysine; alternate is present on lysine 80. An N6-methyllysine; alternate modification is found at lysine 80.

Belongs to the histone H3 family. The nucleosome is a histone octamer containing two molecules each of H2A, H2B, H3 and H4 assembled in one H3-H4 heterotetramer and two H2A-H2B heterodimers. The octamer wraps approximately 147 bp of DNA. Post-translationally, phosphorylated to form H3S10ph. H3S10ph promotes subsequent H3K14ac formation and is required for transcriptional activation through TBP recruitment to the promoters. In terms of processing, mono-, di- and trimethylated by the COMPASS complex to form H3K4me1/2/3. H3K4me activates gene expression by regulating transcription elongation and plays a role in telomere length maintenance. H3K4me enrichment correlates with transcription levels, and occurs in a 5' to 3' gradient with H3K4me3 enrichment at the 5'-end of genes, shifting to H3K4me2 and then H3K4me1. Methylated by SET2 to form H3K36me. H3K36me represses gene expression. Methylated by DOT1 to form H3K79me. H3K79me is required for association of SIR proteins with telomeric regions and for telomeric silencing. The COMPASS-mediated formation of H3K4me2/3 and the DOT1-mediated formation of H3K79me require H2BK123ub1. Acetylation of histone H3 leads to transcriptional activation. H3K14ac formation by GCN5 is promoted by H3S10ph. H3K14ac can also be formed by ESA1. H3K56ac formation occurs predominantly in newly synthesized H3 molecules during G1, S and G2/M of the cell cycle and may be involved in DNA repair.

The protein localises to the nucleus. It localises to the chromosome. Its function is as follows. Core component of nucleosome. Nucleosomes wrap and compact DNA into chromatin, limiting DNA accessibility to the cellular machineries which require DNA as a template. Histones thereby play a central role in transcription regulation, DNA repair, DNA replication and chromosomal stability. DNA accessibility is regulated via a complex set of post-translational modifications of histones, also called histone code, and nucleosome remodeling. The chain is Histone H3 (HHT1) from Coccidioides immitis (strain RS) (Valley fever fungus).